Here is a 496-residue protein sequence, read N- to C-terminus: Glutamyl-tRNA(Gln) amidotransferase subunit A (496 aa).

Residues Lys-75 and Ser-150 each act as charge relay system in the active site. Ser-174 serves as the catalytic Acyl-ester intermediate.

Belongs to the amidase family. GatA subfamily. Heterotrimer of A, B and C subunits.

The catalysed reaction is L-glutamyl-tRNA(Gln) + L-glutamine + ATP + H2O = L-glutaminyl-tRNA(Gln) + L-glutamate + ADP + phosphate + H(+). In terms of biological role, allows the formation of correctly charged Gln-tRNA(Gln) through the transamidation of misacylated Glu-tRNA(Gln) in organisms which lack glutaminyl-tRNA synthetase. The reaction takes place in the presence of glutamine and ATP through an activated gamma-phospho-Glu-tRNA(Gln). The sequence is that of Glutamyl-tRNA(Gln) amidotransferase subunit A from Burkholderia ambifaria (strain MC40-6).